We begin with the raw amino-acid sequence, 201 residues long: Histidinol dehydrogenase (201 aa).

The protein belongs to the histidinol dehydrogenase family. Homodimer. Zn(2+) is required as a cofactor.

The enzyme catalyses L-histidinol + 2 NAD(+) + H2O = L-histidine + 2 NADH + 3 H(+). The protein operates within amino-acid biosynthesis; L-histidine biosynthesis; L-histidine from 5-phospho-alpha-D-ribose 1-diphosphate: step 9/9. Its function is as follows. Catalyzes the sequential NAD-dependent oxidations of L-histidinol to L-histidinaldehyde and then to L-histidine. This chain is Histidinol dehydrogenase (hisD), found in Buchnera aphidicola subsp. Melaphis rhois.